Consider the following 293-residue polypeptide: Movement protein BC1 (293 aa).

Residues 207–228 (SWASRSTIGPSPSYAGSDQGDA) form a disordered region. The segment covering 209–222 (ASRSTIGPSPSYAG) has biased composition (polar residues).

It belongs to the begomovirus movement protein BC1 family. Binds to dimeric supercoiled plasmid DNA. Post-translationally, phosphorylated.

Its subcellular location is the host cell membrane. It localises to the host microsome membrane. The protein localises to the host endoplasmic reticulum membrane. In terms of biological role, movement protein involved in the cell-to-cell and systemic transport of viral genomic DNA. Begomoviruses use 2 proteins to transport their DNA from cell to cell. The nuclear shuttle protein (NSP) shuttles it between nucleus and cytoplasm and the movement protein (MP) probably transports the DNA-NSP complex to the cell periphery and facilitates further movement across the cell wall. In Tomato golden mosaic virus (strain Yellow vein) (TGMV), this protein is Movement protein BC1.